A 334-amino-acid chain; its full sequence is MIEADRLISAAVINDEESIDRAIRPKLLTEYVGQPHVREQMEIFIQAAKQRGDALDHVLIFGPPGLGKTTLANIIANEMGVNLRTTSGPVLEKAGDLAAMLTNLEPHDVLFIDEIHRLSPVVEEILYPAMEDYQLDIMIGEGPAARSIKLDLPPFTLIGATTRAGSLTSPLRDRFGIVQRLEFYQVADLEHIVSRSAKCLGLELTPEGAHQLARRSRGTPRITNRLLRRVRDFAEVRADGAINGEVAMKALDMLNVDAEGFDFMDRKLLLAVIDKFMGGPVGLDNLAAAIGEERETIEDVLEPYLIQQGFIQRTPRGRIATNHAYKHFGITREE.

The tract at residues 4–184 (ADRLISAAVI…FGIVQRLEFY (181 aa)) is large ATPase domain (RuvB-L). Residues Ile23, Arg24, Gly65, Lys68, Thr69, Thr70, 131 to 133 (EDY), Arg174, Tyr184, and Arg221 each bind ATP. Thr69 lines the Mg(2+) pocket. Residues 185–255 (QVADLEHIVS…VAMKALDMLN (71 aa)) are small ATPAse domain (RuvB-S). The interval 258 to 334 (AEGFDFMDRK…YKHFGITREE (77 aa)) is head domain (RuvB-H). DNA-binding residues include Arg294, Arg313, and Arg318.

It belongs to the RuvB family. Homohexamer. Forms an RuvA(8)-RuvB(12)-Holliday junction (HJ) complex. HJ DNA is sandwiched between 2 RuvA tetramers; dsDNA enters through RuvA and exits via RuvB. An RuvB hexamer assembles on each DNA strand where it exits the tetramer. Each RuvB hexamer is contacted by two RuvA subunits (via domain III) on 2 adjacent RuvB subunits; this complex drives branch migration. In the full resolvosome a probable DNA-RuvA(4)-RuvB(12)-RuvC(2) complex forms which resolves the HJ.

The protein resides in the cytoplasm. The catalysed reaction is ATP + H2O = ADP + phosphate + H(+). In terms of biological role, the RuvA-RuvB-RuvC complex processes Holliday junction (HJ) DNA during genetic recombination and DNA repair, while the RuvA-RuvB complex plays an important role in the rescue of blocked DNA replication forks via replication fork reversal (RFR). RuvA specifically binds to HJ cruciform DNA, conferring on it an open structure. The RuvB hexamer acts as an ATP-dependent pump, pulling dsDNA into and through the RuvAB complex. RuvB forms 2 homohexamers on either side of HJ DNA bound by 1 or 2 RuvA tetramers; 4 subunits per hexamer contact DNA at a time. Coordinated motions by a converter formed by DNA-disengaged RuvB subunits stimulates ATP hydrolysis and nucleotide exchange. Immobilization of the converter enables RuvB to convert the ATP-contained energy into a lever motion, pulling 2 nucleotides of DNA out of the RuvA tetramer per ATP hydrolyzed, thus driving DNA branch migration. The RuvB motors rotate together with the DNA substrate, which together with the progressing nucleotide cycle form the mechanistic basis for DNA recombination by continuous HJ branch migration. Branch migration allows RuvC to scan DNA until it finds its consensus sequence, where it cleaves and resolves cruciform DNA. The chain is Holliday junction branch migration complex subunit RuvB from Yersinia pseudotuberculosis serotype O:1b (strain IP 31758).